Here is a 345-residue protein sequence, read N- to C-terminus: Methionine import ATP-binding protein MetN (345 aa).

Residues isoleucine 2–isoleucine 241 form the ABC transporter domain. Glycine 38–serine 45 is a binding site for ATP.

This sequence belongs to the ABC transporter superfamily. Methionine importer (TC 3.A.1.24) family. As to quaternary structure, the complex is composed of two ATP-binding proteins (MetN), two transmembrane proteins (MetI) and a solute-binding protein (MetQ).

The protein resides in the cell inner membrane. It catalyses the reaction L-methionine(out) + ATP + H2O = L-methionine(in) + ADP + phosphate + H(+). It carries out the reaction D-methionine(out) + ATP + H2O = D-methionine(in) + ADP + phosphate + H(+). In terms of biological role, part of the ABC transporter complex MetNIQ involved in methionine import. Responsible for energy coupling to the transport system. The sequence is that of Methionine import ATP-binding protein MetN from Mannheimia succiniciproducens (strain KCTC 0769BP / MBEL55E).